Here is a 416-residue protein sequence, read N- to C-terminus: Serine hydroxymethyltransferase (416 aa).

Residues Leu-121 and 125–127 (GHL) contribute to the (6S)-5,6,7,8-tetrahydrofolate site. Lys-230 is modified (N6-(pyridoxal phosphate)lysine). 355–357 (SPF) lines the (6S)-5,6,7,8-tetrahydrofolate pocket.

It belongs to the SHMT family. Homodimer. Pyridoxal 5'-phosphate is required as a cofactor.

Its subcellular location is the cytoplasm. It catalyses the reaction (6R)-5,10-methylene-5,6,7,8-tetrahydrofolate + glycine + H2O = (6S)-5,6,7,8-tetrahydrofolate + L-serine. Its pathway is one-carbon metabolism; tetrahydrofolate interconversion. It participates in amino-acid biosynthesis; glycine biosynthesis; glycine from L-serine: step 1/1. Functionally, catalyzes the reversible interconversion of serine and glycine with tetrahydrofolate (THF) serving as the one-carbon carrier. This reaction serves as the major source of one-carbon groups required for the biosynthesis of purines, thymidylate, methionine, and other important biomolecules. Also exhibits THF-independent aldolase activity toward beta-hydroxyamino acids, producing glycine and aldehydes, via a retro-aldol mechanism. The protein is Serine hydroxymethyltransferase of Streptococcus thermophilus (strain ATCC BAA-250 / LMG 18311).